A 116-amino-acid polypeptide reads, in one-letter code: Large ribosomal subunit protein bL19 (116 aa).

The protein belongs to the bacterial ribosomal protein bL19 family.

This protein is located at the 30S-50S ribosomal subunit interface and may play a role in the structure and function of the aminoacyl-tRNA binding site. This Fusobacterium nucleatum subsp. nucleatum (strain ATCC 25586 / DSM 15643 / BCRC 10681 / CIP 101130 / JCM 8532 / KCTC 2640 / LMG 13131 / VPI 4355) protein is Large ribosomal subunit protein bL19.